Here is a 351-residue protein sequence, read N- to C-terminus: Alcohol dehydrogenase 2 (351 aa).

7 residues coordinate Zn(2+): Cys47, His70, Cys101, Cys104, Cys107, Cys115, and Cys157. NAD(+) is bound by residues 181–187 (GAGGGLG), Asp205, Lys210, 272–274 (VGL), and Arg344.

It belongs to the zinc-containing alcohol dehydrogenase family. As to quaternary structure, homotetramer. It depends on Zn(2+) as a cofactor.

It catalyses the reaction a secondary alcohol + NAD(+) = a ketone + NADH + H(+). Its function is as follows. Versatile oxidoreductase that catalyzes the oxidation and reduction of a broad range of substrates. Preferentially oxidizes secondary alcohols. Has highest activity for racemic 2-octanol. Is also an efficient reductase for selected substrates. Substrate selectivity was found for medium chain lipophilic ketones. Has highest activities for 2-octanone, 2-nonanone and 2-decanone. The enzyme is (S)-selective in the reduction direction and produces exclusively the (S)-enantiomer. The sequence is that of Alcohol dehydrogenase 2 (ADH2) from Yarrowia lipolytica (strain CLIB 122 / E 150) (Yeast).